A 113-amino-acid polypeptide reads, in one-letter code: Iron-sulfur cluster insertion protein ErpA (113 aa).

C41, C105, and C107 together coordinate iron-sulfur cluster.

This sequence belongs to the HesB/IscA family. In terms of assembly, homodimer. It depends on iron-sulfur cluster as a cofactor.

Functionally, required for insertion of 4Fe-4S clusters for at least IspG. In Vibrio parahaemolyticus serotype O3:K6 (strain RIMD 2210633), this protein is Iron-sulfur cluster insertion protein ErpA.